We begin with the raw amino-acid sequence, 262 residues long: MRIGIFDSGLGGLSVLNEALSKLSEHEFLYYADVKNVPYGQKSRDEILKFSFDAVKFLVKNGAKAVVVACNTATSVAIKELRANLSVPIIGMEPAVKKAHDLSHDDALKTLVIATPVTVNGAKLKELIINLNAKDKTELLALPRLVNFAEKAEFESENVKSYLKEELVKFDLSKFDFLVLGCTHFNYFKDSLREILPPNVSIIDGNEGTIKRLISELGLKISSVNLTPNVKFFYSGEEVCEQNELEKISRNLARLEKMRAIC.

Substrate-binding positions include 7–8 (DS) and 39–40 (YG). The active-site Proton donor/acceptor is the C70. A substrate-binding site is contributed by 71–72 (NT). The active-site Proton donor/acceptor is C182. 183–184 (TH) contacts substrate.

This sequence belongs to the aspartate/glutamate racemases family.

The enzyme catalyses L-glutamate = D-glutamate. The protein operates within cell wall biogenesis; peptidoglycan biosynthesis. Its function is as follows. Provides the (R)-glutamate required for cell wall biosynthesis. This is Glutamate racemase from Campylobacter concisus (strain 13826).